The sequence spans 547 residues: Glucose-6-phosphate isomerase (547 aa).

Glu-352 serves as the catalytic Proton donor. Active-site residues include His-383 and Lys-511.

This sequence belongs to the GPI family.

Its subcellular location is the cytoplasm. It catalyses the reaction alpha-D-glucose 6-phosphate = beta-D-fructose 6-phosphate. It functions in the pathway carbohydrate biosynthesis; gluconeogenesis. The protein operates within carbohydrate degradation; glycolysis; D-glyceraldehyde 3-phosphate and glycerone phosphate from D-glucose: step 2/4. Functionally, catalyzes the reversible isomerization of glucose-6-phosphate to fructose-6-phosphate. The chain is Glucose-6-phosphate isomerase from Magnetococcus marinus (strain ATCC BAA-1437 / JCM 17883 / MC-1).